The primary structure comprises 29 residues: Cliotide T18 (29 aa).

The segment at residues 1–29 is a cross-link (cyclopeptide (Gly-Asn)); the sequence is GLPICGETCFTGTCYTPGCTCSYPVCKKN. 3 disulfide bridges follow: C5-C19, C9-C21, and C14-C26.

In terms of processing, contains 3 disulfide bonds. Post-translationally, this is a cyclic peptide. As to expression, expressed in root nodules but not in seed.

In terms of biological role, probably participates in a plant defense mechanism. The polypeptide is Cliotide T18 (Clitoria ternatea (Butterfly pea)).